Here is a 476-residue protein sequence, read N- to C-terminus: 8-amino-7-oxononanoate synthase (476 aa).

R24 is a substrate binding site. 171 to 172 (GF) provides a ligand contact to pyridoxal 5'-phosphate. H210 contributes to the substrate binding site. Pyridoxal 5'-phosphate is bound by residues S260, 285–288 (DDAH), and 316–319 (TLSK). K319 is modified (N6-(pyridoxal phosphate)lysine). T427 is a substrate binding site. Residues 474 to 476 (PKL) carry the Peroxisomal targeting signal PTS1 motif.

The protein belongs to the class-II pyridoxal-phosphate-dependent aminotransferase family. BioF subfamily. As to quaternary structure, monomer. It depends on pyridoxal 5'-phosphate as a cofactor.

Its subcellular location is the cytoplasm. The protein resides in the cytosol. It is found in the peroxisome. The enzyme catalyses 6-carboxyhexanoyl-[ACP] + L-alanine + H(+) = (8S)-8-amino-7-oxononanoate + holo-[ACP] + CO2. It functions in the pathway cofactor biosynthesis; biotin biosynthesis; 8-amino-7-oxononanoate from pimeloyl-CoA: step 1/1. Functionally, catalyzes the decarboxylative condensation of pimeloyl-[acyl-carrier protein] and L-alanine to produce 8-amino-7-oxononanoate (AON), [acyl-carrier protein], and carbon dioxide. Required for the biosynthesis of D-biotin that prevents light-mediated cell death and modulates defense gene expression, probably by avoiding hydrogen peroxide H(2)O(2) accumulation. In Arabidopsis thaliana (Mouse-ear cress), this protein is 8-amino-7-oxononanoate synthase.